A 1444-amino-acid chain; its full sequence is Probable serine/threonine-protein kinase irlC (1444 aa).

Positions 335–370 (TLINNNNNNNNNNNNNNNNNNNNNNNNNNNNNNNSK) are disordered. Residues 338-368 (NNNNNNNNNNNNNNNNNNNNNNNNNNNNNNN) show a composition bias toward low complexity. Residues 495 to 529 (FTFYLSFGEIFTCSCEDYKREFSCKHMFFILLNYY) form an SWIM-type zinc finger. The segment covering 584-613 (TSPFQSINNNNNNNLNNNNNNNLNNNNNNE) has biased composition (low complexity). Disordered stretches follow at residues 584–619 (TSPF…NKFK) and 864–938 (QKEK…ITPI). Coiled coils occupy residues 593 to 620 (NNNN…KFKE) and 847 to 879 (IKAE…KSKI). Residues 864 to 876 (QKEKKKQKQKQSK) are compositionally biased toward basic residues. The segment covering 885–937 (SSSSSSSSSPSTSNTTITSTTPTTTTTTTTTTTPTTTTTTTTTSSPKQKPITP) has biased composition (low complexity). Residues 981–1246 (RKEENVLGRG…IEKILLHPFF (266 aa)) enclose the Protein kinase domain. ATP contacts are provided by residues 987–995 (LGRGSNGTL) and Lys1010. Residue Asp1116 is the Proton acceptor of the active site. Residues 1279–1444 (NYQEINLKNN…LIYFNDLIIK (166 aa)) form the KEN domain.

This sequence belongs to the protein kinase superfamily. Ser/Thr protein kinase family.

The catalysed reaction is L-seryl-[protein] + ATP = O-phospho-L-seryl-[protein] + ADP + H(+). It catalyses the reaction L-threonyl-[protein] + ATP = O-phospho-L-threonyl-[protein] + ADP + H(+). The sequence is that of Probable serine/threonine-protein kinase irlC (irlC) from Dictyostelium discoideum (Social amoeba).